Here is a 302-residue protein sequence, read N- to C-terminus: MMILMEYHNPVLLKESVDGLDVKPDGIYVDVTFGGGGHSKEILKRLGPDGKLYAFDQDKDALENKIEDGRFTLINENFRYLKRFLRFYGIKKVDGVLGDFGVSSHQFNEAERGFSTRFDAKLDMRMNQGDKLSAYEVINEYEEEQLKKLFWAYADLKNAPKLARTIVSERKNNPIETSEQLNDLLKPLLFKGKENKILAQIYQAIRIEVNQEIEVLKEFLLQTEEILKPGGRLSLISYHSLEDRLVKRYIRSGLFEGEPEKDMYGNISVPFKKVNGLIIPSKEEIQQNNRARSAKLRVARKL.

S-adenosyl-L-methionine is bound by residues 36 to 38 (GGH), Asp-56, Phe-84, Asp-99, and Gln-106.

Belongs to the methyltransferase superfamily. RsmH family.

The protein localises to the cytoplasm. The enzyme catalyses cytidine(1402) in 16S rRNA + S-adenosyl-L-methionine = N(4)-methylcytidine(1402) in 16S rRNA + S-adenosyl-L-homocysteine + H(+). Specifically methylates the N4 position of cytidine in position 1402 (C1402) of 16S rRNA. The sequence is that of Ribosomal RNA small subunit methyltransferase H from Christiangramia forsetii (strain DSM 17595 / CGMCC 1.15422 / KT0803) (Gramella forsetii).